A 70-amino-acid chain; its full sequence is MPVKKGEMVRAIREKLENSVEATASDTRFPAYLFETKGEVVDIKGDYALVMFGQVPTPNIWLRLDQIESF.

The protein belongs to the complex I NdhO subunit family. As to quaternary structure, NDH-1 can be composed of about 15 different subunits; different subcomplexes with different compositions have been identified which probably have different functions.

It localises to the cellular thylakoid membrane. It catalyses the reaction a plastoquinone + NADH + (n+1) H(+)(in) = a plastoquinol + NAD(+) + n H(+)(out). The catalysed reaction is a plastoquinone + NADPH + (n+1) H(+)(in) = a plastoquinol + NADP(+) + n H(+)(out). Its function is as follows. NDH-1 shuttles electrons from an unknown electron donor, via FMN and iron-sulfur (Fe-S) centers, to quinones in the respiratory and/or the photosynthetic chain. The immediate electron acceptor for the enzyme in this species is believed to be plastoquinone. Couples the redox reaction to proton translocation, and thus conserves the redox energy in a proton gradient. Cyanobacterial NDH-1 also plays a role in inorganic carbon-concentration. The protein is NAD(P)H-quinone oxidoreductase subunit O of Trichormus variabilis (strain ATCC 29413 / PCC 7937) (Anabaena variabilis).